The following is a 400-amino-acid chain: S-adenosylmethionine synthase (400 aa).

Histidine 17 serves as a coordination point for ATP. Residue aspartate 19 participates in Mg(2+) binding. Glutamate 45 contributes to the K(+) binding site. Residues glutamate 58 and glutamine 101 each contribute to the L-methionine site. Residues 101-111 (QSADIAMGVDQ) are flexible loop. Residues 177–179 (DGK), 244–245 (RF), aspartate 253, 259–260 (RK), alanine 276, and lysine 280 each bind ATP. Aspartate 253 serves as a coordination point for L-methionine. Residue lysine 284 participates in L-methionine binding.

It belongs to the AdoMet synthase family. As to quaternary structure, homotetramer; dimer of dimers. Requires Mg(2+) as cofactor. K(+) is required as a cofactor.

Its subcellular location is the cytoplasm. The catalysed reaction is L-methionine + ATP + H2O = S-adenosyl-L-methionine + phosphate + diphosphate. The protein operates within amino-acid biosynthesis; S-adenosyl-L-methionine biosynthesis; S-adenosyl-L-methionine from L-methionine: step 1/1. Its function is as follows. Catalyzes the formation of S-adenosylmethionine (AdoMet) from methionine and ATP. The overall synthetic reaction is composed of two sequential steps, AdoMet formation and the subsequent tripolyphosphate hydrolysis which occurs prior to release of AdoMet from the enzyme. This Bacillus velezensis (strain DSM 23117 / BGSC 10A6 / LMG 26770 / FZB42) (Bacillus amyloliquefaciens subsp. plantarum) protein is S-adenosylmethionine synthase.